Reading from the N-terminus, the 245-residue chain is MDDASTLIDVKEYPDTEVQKNRVLTLEEWREKWVDGKIGFHQEQGHQLLKKHLDTFLKGKNVLRVFFPLCGKAVEMKWFADRGHCVVGVEISELGIREFFTEQNLSYSEEPIMEIPGAKVFKSSSGNISLYCCNLFDLPRVNIGKFDRIWDRGALVAVNPGDRKCYTDIMLSLTRKGFRYLLAVLSYDPTKHPGPPFYVPDAEIKNLFGSTCNIHCLEKVDVFEERHKSWGIDYIVEKLYLLTEK.

29 to 40 (WREKWVDGKIGF) is an S-adenosyl-L-methionine binding site. Residue Phe40 participates in substrate binding. An N6-acetyllysine modification is found at Lys58. S-adenosyl-L-methionine is bound by residues Leu69, Glu90, and Arg152.

Belongs to the class I-like SAM-binding methyltransferase superfamily. TPMT family. In terms of assembly, monomer.

It is found in the cytoplasm. The enzyme catalyses S-adenosyl-L-methionine + a thiopurine = S-adenosyl-L-homocysteine + a thiopurine S-methylether.. This is Thiopurine S-methyltransferase (TPMT) from Panthera leo (Lion).